The chain runs to 675 residues: DNA ligase (675 aa).

Residues 35 to 39, 84 to 85, and Glu-115 contribute to the NAD(+) site; these read DSEYD and SL. Lys-117 (N6-AMP-lysine intermediate) is an active-site residue. 4 residues coordinate NAD(+): Arg-138, Glu-175, Lys-292, and Lys-316. Cys-410, Cys-413, Cys-428, and Cys-434 together coordinate Zn(2+). The 83-residue stretch at 593 to 675 folds into the BRCT domain; that stretch reads QIVQPLLGRT…RNFLDDTSFP (83 aa).

Belongs to the NAD-dependent DNA ligase family. LigA subfamily. The cofactor is Mg(2+). Mn(2+) serves as cofactor.

The catalysed reaction is NAD(+) + (deoxyribonucleotide)n-3'-hydroxyl + 5'-phospho-(deoxyribonucleotide)m = (deoxyribonucleotide)n+m + AMP + beta-nicotinamide D-nucleotide.. DNA ligase that catalyzes the formation of phosphodiester linkages between 5'-phosphoryl and 3'-hydroxyl groups in double-stranded DNA using NAD as a coenzyme and as the energy source for the reaction. It is essential for DNA replication and repair of damaged DNA. This is DNA ligase from Nitrosococcus oceani (strain ATCC 19707 / BCRC 17464 / JCM 30415 / NCIMB 11848 / C-107).